An 87-amino-acid chain; its full sequence is Large ribosomal subunit protein bL28 (87 aa).

It belongs to the bacterial ribosomal protein bL28 family.

In Akkermansia muciniphila (strain ATCC BAA-835 / DSM 22959 / JCM 33894 / BCRC 81048 / CCUG 64013 / CIP 107961 / Muc), this protein is Large ribosomal subunit protein bL28.